A 906-amino-acid polypeptide reads, in one-letter code: Formin-like protein 16 (906 aa).

The signal sequence occupies residues 1-28; sequence MAPAPSPTPLPLFLLLLLLVGVAPLAAA. Positions 34–76 are disordered; sequence QTRFPSTRTPAFATPPPITSPSPSPGTPTATPSSSPPSSSGKR. A compositionally biased stretch (pro residues) spans 46–59; it reads ATPPPITSPSPSPG. The segment covering 60–73 has biased composition (low complexity); the sequence is TPTATPSSSPPSSS. The helical transmembrane segment at 81 to 101 threads the bilayer; the sequence is VAVVSTALSSFAVSGLAFFLF. 6 disordered regions span residues 113 to 149, 161 to 223, 250 to 404, 451 to 474, 677 to 702, and 834 to 906; these read AGGA…VDEN, KEGD…SLDS, AYAR…DQQA, RKTK…GRSN, GSLA…REER, and LQQQ…SDEE. Over residues 114–128 the composition is skewed to gly residues; sequence GGAGQHYGGAQGGAL. Residues 174 to 185 show a composition bias toward pro residues; it reads SRRPPQPPPPRP. The segment covering 186–196 has biased composition (basic and acidic residues); the sequence is YRAERRQDAHE. Positions 270-294 are enriched in pro residues; the sequence is SPSPAPAPAARPASPSPSLPLPPGR. Low complexity predominate over residues 295–310; it reads ESPSRPQSIAAAAVAS. The span at 311 to 383 shows a compositional bias: pro residues; that stretch reads PAPPPPPPPK…KGGPPPPPPK (73 aa). The 454-residue stretch at 396 to 849 folds into the FH2 domain; that stretch reads PTGSADQQAK…PTPPPSSSQP (454 aa). Composition is skewed to polar residues over residues 463-474 and 677-697; these read GGSTSAGLGRSN and GSLA…SQGP. Positions 847 to 866 are enriched in low complexity; that stretch reads SQPAAPAATTKGAADDAPAP.

Belongs to the formin-like family. Class-I subfamily.

It is found in the membrane. The polypeptide is Formin-like protein 16 (FH16) (Oryza sativa subsp. japonica (Rice)).